Reading from the N-terminus, the 273-residue chain is Kit ligand (273 aa).

An N-terminal signal peptide occupies residues 1 to 25 (MKKTQTWILTCIYLQLLLFNPLVKT). The Extracellular portion of the chain corresponds to 26 to 214 (EGICRNRVTN…KNPPGDSSLH (189 aa)). Intrachain disulfides connect Cys-29–Cys-114 and Cys-68–Cys-163. Residues Asn-90 and Asn-118 are each glycosylated (N-linked (GlcNAc...) asparagine; partial). Residue Asn-145 is glycosylated (N-linked (GlcNAc...) asparagine). O-linked (GalNAc...) serine glycosylation occurs at Ser-167. 2 O-linked (GalNAc...) threonine glycosylation sites follow: Thr-168 and Thr-180. Asn-195 carries N-linked (GlcNAc...) asparagine glycosylation. A helical membrane pass occupies residues 215–237 (WAAMALPALFSLIIGFAFGALYW). At 238 to 273 (KKRQPSLTRAVENIQINEEDNEISMLQEKEREFQEV) the chain is on the cytoplasmic side.

The protein belongs to the SCF family. Homodimer, non-covalently linked. Heterotetramer with KIT, binding two KIT molecules; thereby mediates KIT dimerization and subsequent activation by autophosphorylation. Post-translationally, a soluble form (sKITLG) is produced by proteolytic processing of isoform 1 in the extracellular domain. Found in two differentially glycosylated forms, LMW-SCF and HMW-SCF. LMW-SCF is fully N-glycosylated at Asn-145, partially N-glycosylated at Asn-90, O-glycosylated at Ser-167, Thr-168 and Thr-180, and not glycosylated at Asn-97 or Asn-118. HMW-SCF is N-glycosylated at Asn-118, Asn-90 and Asn-145, O-glycosylated at Ser-167, Thr-168 and Thr-180, and not glycosylated at Asn-97. In terms of processing, a soluble form exists as a cleavage product of the extracellular domain.

It localises to the cell membrane. It is found in the cytoplasm. The protein localises to the cytoskeleton. Its subcellular location is the cell projection. The protein resides in the lamellipodium. It localises to the filopodium. It is found in the secreted. In terms of biological role, ligand for the receptor-type protein-tyrosine kinase KIT. Plays an essential role in the regulation of cell survival and proliferation, hematopoiesis, stem cell maintenance, gametogenesis, mast cell development, migration and function, and in melanogenesis. KITLG/SCF binding can activate several signaling pathways. Promotes phosphorylation of PIK3R1, the regulatory subunit of phosphatidylinositol 3-kinase, and subsequent activation of the kinase AKT1. KITLG/SCF and KIT also transmit signals via GRB2 and activation of RAS, RAF1 and the MAP kinases MAPK1/ERK2 and/or MAPK3/ERK1. KITLG/SCF and KIT promote activation of STAT family members STAT1, STAT3 and STAT5. KITLG/SCF and KIT promote activation of PLCG1, leading to the production of the cellular signaling molecules diacylglycerol and inositol 1,4,5-trisphosphate. KITLG/SCF acts synergistically with other cytokines, probably interleukins. This chain is Kit ligand, found in Homo sapiens (Human).